Consider the following 113-residue polypeptide: Hydrogenase maturation factor HypA (113 aa).

His-2 contributes to the Ni(2+) binding site. Zn(2+)-binding residues include Cys-73, Cys-76, Cys-89, and Cys-92.

This sequence belongs to the HypA/HybF family.

Its function is as follows. Involved in the maturation of [NiFe] hydrogenases. Required for nickel insertion into the metal center of the hydrogenase. In Acidithiobacillus ferrooxidans (strain ATCC 23270 / DSM 14882 / CIP 104768 / NCIMB 8455) (Ferrobacillus ferrooxidans (strain ATCC 23270)), this protein is Hydrogenase maturation factor HypA.